The following is a 636-amino-acid chain: Epsin-3 (636 aa).

A 1,2-diacyl-sn-glycero-3-phospho-(1D-myo-inositol-4,5-bisphosphate)-binding residues include R8, K11, R25, N30, R63, and H73. The ENTH domain maps to 12–144 (NIVHNYSEAE…KDEERLRQER (133 aa)). The tract at residues 153–503 (RMALEGMGIG…TPESFLGPSA (351 aa)) is disordered. The segment covering 174–189 (GSPSSYTSASSSPRYA) has biased composition (low complexity). Residues S184 and S185 each carry the phosphoserine modification. UIM domains lie at 202–221 (EEEL…AERP) and 229–248 (DEDL…HEKG). 2 stretches are compositionally biased toward basic and acidic residues: residues 214 to 231 (SREE…RDED) and 242 to 256 (RQEH…KGDD). The residue at position 257 (S257) is a Phosphoserine. Residues 270-288 (RQRDREPEREERKEEEKLK) are compositionally biased toward basic and acidic residues. 5 consecutive repeat copies span residues 315–317 (DPW), 338–340 (DPW), 365–367 (EPW), 381–383 (DPW), and 398–400 (DPW). Positions 315 to 400 (DPWDIPGLRP…KLPSTGADPW (86 aa)) are 5 X 3 AA repeats of [DE]-P-W. The segment covering 426–435 (ESTEPKESRD) has biased composition (basic and acidic residues). 2 repeat units span residues 523 to 525 (NPF) and 536 to 538 (NPF). Residues 523 to 635 (NPFLTGLGVP…LPPQAGTNPF (113 aa)) are 3 X 3 AA repeats of N-P-F. The segment covering 607–616 (PPPASLPQPL) has biased composition (pro residues). The disordered stretch occupies residues 607-636 (PPPASLPQPLLPTSGPMGPLPPQAGTNPFL). The stretch at 633–635 (NPF) is repeat 3.

The protein belongs to the epsin family.

It localises to the cytoplasm. It is found in the cell cortex. The protein resides in the perinuclear region. Its subcellular location is the cytoplasmic vesicle. The protein localises to the clathrin-coated vesicle. The sequence is that of Epsin-3 (Epn3) from Mus musculus (Mouse).